Consider the following 339-residue polypeptide: Ketol-acid reductoisomerase (NADP(+)) (339 aa).

The KARI N-terminal Rossmann domain maps to Met1 to Thr182. NADP(+) is bound by residues Tyr24 to Gln27, Arg48, Ser51, Thr53, and Asp83 to Gln86. Residue His108 is part of the active site. Gly134 contacts NADP(+). Residues Thr183–Ile328 form the KARI C-terminal knotted domain. Mg(2+) is bound by residues Asp191, Glu195, Glu227, and Glu231. Ser252 is a substrate binding site.

Belongs to the ketol-acid reductoisomerase family. The cofactor is Mg(2+).

It catalyses the reaction (2R)-2,3-dihydroxy-3-methylbutanoate + NADP(+) = (2S)-2-acetolactate + NADPH + H(+). The enzyme catalyses (2R,3R)-2,3-dihydroxy-3-methylpentanoate + NADP(+) = (S)-2-ethyl-2-hydroxy-3-oxobutanoate + NADPH + H(+). It participates in amino-acid biosynthesis; L-isoleucine biosynthesis; L-isoleucine from 2-oxobutanoate: step 2/4. Its pathway is amino-acid biosynthesis; L-valine biosynthesis; L-valine from pyruvate: step 2/4. Its function is as follows. Involved in the biosynthesis of branched-chain amino acids (BCAA). Catalyzes an alkyl-migration followed by a ketol-acid reduction of (S)-2-acetolactate (S2AL) to yield (R)-2,3-dihydroxy-isovalerate. In the isomerase reaction, S2AL is rearranged via a Mg-dependent methyl migration to produce 3-hydroxy-3-methyl-2-ketobutyrate (HMKB). In the reductase reaction, this 2-ketoacid undergoes a metal-dependent reduction by NADPH to yield (R)-2,3-dihydroxy-isovalerate. In Beijerinckia indica subsp. indica (strain ATCC 9039 / DSM 1715 / NCIMB 8712), this protein is Ketol-acid reductoisomerase (NADP(+)).